The primary structure comprises 270 residues: Undecaprenyl-diphosphatase 1 (270 aa).

6 consecutive transmembrane segments (helical) span residues 79 to 99 (NLLL…LLFS), 105 to 125 (VLFN…IILW), 155 to 175 (LALI…LFLG), 182 to 202 (TEFS…YSLI), 215 to 235 (VFAV…RALL), and 242 to 262 (SFAV…GTWW).

It belongs to the UppP family.

The protein localises to the cell inner membrane. The enzyme catalyses di-trans,octa-cis-undecaprenyl diphosphate + H2O = di-trans,octa-cis-undecaprenyl phosphate + phosphate + H(+). In terms of biological role, catalyzes the dephosphorylation of undecaprenyl diphosphate (UPP). Confers resistance to bacitracin. This is Undecaprenyl-diphosphatase 1 from Chromobacterium violaceum (strain ATCC 12472 / DSM 30191 / JCM 1249 / CCUG 213 / NBRC 12614 / NCIMB 9131 / NCTC 9757 / MK).